The primary structure comprises 390 residues: NADH-quinone oxidoreductase subunit D (390 aa).

This sequence belongs to the complex I 49 kDa subunit family. As to quaternary structure, NDH-1 is composed of 14 different subunits. Subunits NuoB, C, D, E, F, and G constitute the peripheral sector of the complex.

It localises to the cell inner membrane. The enzyme catalyses a quinone + NADH + 5 H(+)(in) = a quinol + NAD(+) + 4 H(+)(out). In terms of biological role, NDH-1 shuttles electrons from NADH, via FMN and iron-sulfur (Fe-S) centers, to quinones in the respiratory chain. The immediate electron acceptor for the enzyme in this species is believed to be ubiquinone. Couples the redox reaction to proton translocation (for every two electrons transferred, four hydrogen ions are translocated across the cytoplasmic membrane), and thus conserves the redox energy in a proton gradient. In Geobacter sulfurreducens (strain ATCC 51573 / DSM 12127 / PCA), this protein is NADH-quinone oxidoreductase subunit D.